The following is an 82-amino-acid chain: Mu-conotoxin MrVIA (82 aa).

Positions 1–22 are cleaved as a signal peptide; the sequence is MKLTCMMIVAVLFLTAWTLVMA. A propeptide spanning residues 23 to 49 is cleaved from the precursor; that stretch reads DDSNNGLANHFSKSRDEMEDPEASKLE. Intrachain disulfides connect Cys-53–Cys-71, Cys-60–Cys-76, and Cys-70–Cys-81.

Expressed by the venom duct.

The protein localises to the secreted. In terms of biological role, muO-conotoxins are gating-modifier toxins that inhibit sodium current by trapping the domain II voltage sensor in the closed position to prevent opening of the sodium channel. This toxin inhibits rNav1.2/SCN2A (IC(50)=532 nM), rNav1.4/SCN4A (IC(50)=438 nM) and rNav1.7/SCN9A (IC(50)=345 nM). It blocks Nav channels by interacting mainly with the C-terminal part of the pore loop of domain-3. It does not bind on site 1. At small concentration, this toxin also acts as a calcium current agonist, whereas at higher doses it blocks fast-inactivating calcium current. In Conus marmoreus (Marble cone), this protein is Mu-conotoxin MrVIA.